Consider the following 314-residue polypeptide: 3'-5' exoribonuclease YhaM (314 aa).

An HD domain is found at 163 to 279 (HVVSMLDLAK…LHYIDNLDAK (117 aa)).

Belongs to the YhaM family.

Shows a 3'-5' exoribonuclease activity. This is 3'-5' exoribonuclease YhaM from Bacillus cereus (strain 03BB102).